A 141-amino-acid chain; its full sequence is HTH-type transcriptional repressor NsrR (141 aa).

Positions 2-129 (QLTSFTDYAL…DDCSIAELLD (128 aa)) constitute an HTH rrf2-type domain. The segment at residues 28–51 (ITDVTELFGVSRNHMVKVINRLGQ) is a DNA-binding region (H-T-H motif). [2Fe-2S] cluster-binding residues include cysteine 91, cysteine 96, and cysteine 102.

Requires [2Fe-2S] cluster as cofactor.

Nitric oxide-sensitive repressor of genes involved in protecting the cell against nitrosative stress. May require iron for activity. This chain is HTH-type transcriptional repressor NsrR, found in Vibrio vulnificus (strain CMCP6).